Reading from the N-terminus, the 201-residue chain is Superoxide dismutase [Fe] (201 aa).

Residues H27, H79, D161, and H165 each coordinate Fe cation.

Belongs to the iron/manganese superoxide dismutase family. In terms of assembly, homodimer. Requires Fe cation as cofactor.

It catalyses the reaction 2 superoxide + 2 H(+) = H2O2 + O2. In terms of biological role, destroys superoxide anion radicals which are normally produced within the cells and which are toxic to biological systems. In Synechococcus elongatus (strain ATCC 33912 / PCC 7942 / FACHB-805) (Anacystis nidulans R2), this protein is Superoxide dismutase [Fe] (sodB).